A 447-amino-acid chain; its full sequence is N-succinylarginine dihydrolase (447 aa).

Substrate-binding positions include 19–28, asparagine 110, and 137–138; these read AGLSFGNEAS and HR. Residue glutamate 174 is part of the active site. Residue arginine 212 participates in substrate binding. Histidine 248 is a catalytic residue. Residues aspartate 250 and asparagine 359 each contribute to the substrate site. The active-site Nucleophile is the cysteine 365.

This sequence belongs to the succinylarginine dihydrolase family. As to quaternary structure, homodimer.

The enzyme catalyses N(2)-succinyl-L-arginine + 2 H2O + 2 H(+) = N(2)-succinyl-L-ornithine + 2 NH4(+) + CO2. Its pathway is amino-acid degradation; L-arginine degradation via AST pathway; L-glutamate and succinate from L-arginine: step 2/5. Its function is as follows. Catalyzes the hydrolysis of N(2)-succinylarginine into N(2)-succinylornithine, ammonia and CO(2). This Escherichia fergusonii (strain ATCC 35469 / DSM 13698 / CCUG 18766 / IAM 14443 / JCM 21226 / LMG 7866 / NBRC 102419 / NCTC 12128 / CDC 0568-73) protein is N-succinylarginine dihydrolase.